Reading from the N-terminus, the 88-residue chain is Auxin-responsive protein SAUR21 (88 aa).

This sequence belongs to the ARG7 family.

The protein localises to the cell membrane. Functionally, functions as a positive effector of cell expansion through modulation of auxin transport. This Arabidopsis thaliana (Mouse-ear cress) protein is Auxin-responsive protein SAUR21.